The primary structure comprises 93 residues: UPF0358 protein YlaN (93 aa).

Belongs to the UPF0358 family.

In terms of biological role, essential for cell growth and for normal cell shape. This is UPF0358 protein YlaN (ylaN) from Bacillus subtilis (strain 168).